The primary structure comprises 448 residues: Phosphoglucosamine mutase (448 aa).

Ser100 functions as the Phosphoserine intermediate in the catalytic mechanism. Residues Ser100, Asp240, Asp242, and Asp244 each coordinate Mg(2+). Residue Ser100 is modified to Phosphoserine.

This sequence belongs to the phosphohexose mutase family. The cofactor is Mg(2+). Post-translationally, activated by phosphorylation.

It carries out the reaction alpha-D-glucosamine 1-phosphate = D-glucosamine 6-phosphate. In terms of biological role, catalyzes the conversion of glucosamine-6-phosphate to glucosamine-1-phosphate. This chain is Phosphoglucosamine mutase, found in Alkaliphilus metalliredigens (strain QYMF).